A 68-amino-acid polypeptide reads, in one-letter code: Large ribosomal subunit protein bL35 (68 aa).

It belongs to the bacterial ribosomal protein bL35 family.

The sequence is that of Large ribosomal subunit protein bL35 from Rickettsia conorii (strain ATCC VR-613 / Malish 7).